A 334-amino-acid chain; its full sequence is Thiamine thiazole synthase (334 aa).

Residues Cys-86, 107–108 (EA), Gly-115, and Val-183 contribute to the substrate site. Cys-221 is subject to 2,3-didehydroalanine (Cys). Substrate contacts are provided by residues Asp-223, His-238, Met-290, and 300–302 (RMG).

This sequence belongs to the THI4 family. Homooctamer. It depends on Fe cation as a cofactor. In terms of processing, during the catalytic reaction, a sulfide is transferred from Cys-221 to a reaction intermediate, generating a dehydroalanine residue.

The protein localises to the cytoplasm. It is found in the nucleus. The enzyme catalyses [ADP-thiazole synthase]-L-cysteine + glycine + NAD(+) = [ADP-thiazole synthase]-dehydroalanine + ADP-5-ethyl-4-methylthiazole-2-carboxylate + nicotinamide + 3 H2O + 2 H(+). In terms of biological role, involved in biosynthesis of the thiamine precursor thiazole. Catalyzes the conversion of NAD and glycine to adenosine diphosphate 5-(2-hydroxyethyl)-4-methylthiazole-2-carboxylic acid (ADT), an adenylated thiazole intermediate. The reaction includes an iron-dependent sulfide transfer from a conserved cysteine residue of the protein to a thiazole intermediate. The enzyme can only undergo a single turnover, which suggests it is a suicide enzyme. May have additional roles in adaptation to various stress conditions and in DNA damage tolerance. The chain is Thiamine thiazole synthase from Ajellomyces capsulatus (strain G186AR / H82 / ATCC MYA-2454 / RMSCC 2432) (Darling's disease fungus).